Consider the following 75-residue polypeptide: MGMPSMPELLIVLAIVVLLFGAKKIPDLAKGMGKGIKDFKKAIKEDDEEEEVKEITKKEEPKVEAAAEEKKSENA.

Residues 1 to 21 traverse the membrane as a helical segment; it reads MGMPSMPELLIVLAIVVLLFG. The segment at 47–75 is disordered; the sequence is DEEEEVKEITKKEEPKVEAAAEEKKSENA. A compositionally biased stretch (basic and acidic residues) spans 53–75; that stretch reads KEITKKEEPKVEAAAEEKKSENA.

The protein belongs to the TatA/E family. The Tat system comprises two distinct complexes: a TatABC complex, containing multiple copies of TatA, TatB and TatC subunits, and a separate TatA complex, containing only TatA subunits. Substrates initially bind to the TatABC complex, which probably triggers association of the separate TatA complex to form the active translocon.

Its subcellular location is the cell inner membrane. Part of the twin-arginine translocation (Tat) system that transports large folded proteins containing a characteristic twin-arginine motif in their signal peptide across membranes. TatA could form the protein-conducting channel of the Tat system. The protein is Sec-independent protein translocase protein TatA of Sulfurovum sp. (strain NBC37-1).